A 1849-amino-acid chain; its full sequence is Protein TANC1 (1849 aa).

Position 1 is an N-acetylmethionine (methionine 1). Disordered regions lie at residues 1-47 and 59-109; these read MLKA…TTED and MSLP…FREG. Basic and acidic residues predominate over residues 8–21; it reads KSREGVKGSKKEAG. Polar residues predominate over residues 27–46; sequence ETPTLSSSGDSPVNSLSTTE. Residues serine 60, serine 63, serine 64, serine 204, serine 267, and serine 455 each carry the phosphoserine modification. Disordered regions lie at residues 264–309 and 430–481; these read DNCS…PRPN and VASS…QRPR. Low complexity predominate over residues 451–468; the sequence is TPLLSPSSSTSALSAART. 11 ANK repeats span residues 886–918, 924–953, 957–986, 990–1019, 1030–1059, 1068–1097, 1101–1130, 1134–1163, 1167–1196, 1200–1229, and 1233–1262; these read EGLS…NVNY, NNAP…CLDG, NGMN…RVDH, KGQC…SAGP, ALQQ…EHEI, WGET…AVSR, RGVP…DVNP, QGRT…ALSS, EGLS…EIDQ, NGRT…VIEH, and SGMR…KLGN. 3 TPR repeats span residues 1279 to 1312, 1326 to 1359, and 1361 to 1393; these read LQKL…FPRE, VSLY…KPKS, and EAFY…CPTN. A compositionally biased stretch (low complexity) spans 1410 to 1421; that stretch reads LQRNQQQKQQAP. 4 disordered regions span residues 1410–1503, 1527–1605, 1635–1711, and 1812–1849; these read LQRN…ISKS, NQHL…GESG, QGGP…PRNT, and PHLY…ESNV. Serine 1429 and serine 1456 each carry phosphoserine. Positions 1447–1456 are enriched in acidic residues; it reads EEAEEEDTSS. 2 stretches are compositionally biased toward polar residues: residues 1527–1546 and 1593–1603; these read NQHL…KVQV and PSQSLQLQRGE. Residues 1649-1679 show a composition bias toward low complexity; that stretch reads SLSSSGSSGSPSSSVKMSSSTSSLTSSSSVS. Phosphoserine is present on residues serine 1658, serine 1666, and serine 1667.

The protein belongs to the TANC family. In terms of assembly, interacts probably directly with DLG1, DLG4, HOMER1. Interacts with DLGAP1, INA, CAMK2A, GRIN2B and GRIA1. Interacts with TNIK and MINK1. Post-translationally, phosphorylated; by MINK1 and TNIK upon stimulation by RAP2A. Expressed in heart, lung, liver and kidney. Expressed in brain (at protein level).

The protein localises to the postsynaptic density. In terms of biological role, may be a scaffold component in the postsynaptic density. The chain is Protein TANC1 (Tanc1) from Rattus norvegicus (Rat).